The sequence spans 237 residues: Ribonuclease PH (237 aa).

Phosphate-binding positions include arginine 86 and 124 to 126 (GTR).

Belongs to the RNase PH family. Homohexameric ring arranged as a trimer of dimers.

The catalysed reaction is tRNA(n+1) + phosphate = tRNA(n) + a ribonucleoside 5'-diphosphate. Functionally, phosphorolytic 3'-5' exoribonuclease that plays an important role in tRNA 3'-end maturation. Removes nucleotide residues following the 3'-CCA terminus of tRNAs; can also add nucleotides to the ends of RNA molecules by using nucleoside diphosphates as substrates, but this may not be physiologically important. Probably plays a role in initiation of 16S rRNA degradation (leading to ribosome degradation) during starvation. The sequence is that of Ribonuclease PH from Beijerinckia indica subsp. indica (strain ATCC 9039 / DSM 1715 / NCIMB 8712).